The primary structure comprises 178 residues: MVSVPTTWCSVALALLVALHEGKGQAAATLEQPASSSHAQGTHLRLRRCSCSSWLDKECVYFCHLDIIWVNTPEQTAPYGLGNPPRRRRRSLPRRCQCSSARDPACATFCLRRPWTEAGAVPSRKSPADVFQTGKTGATTGELLQRLRDISTVKSLFAKRQQEAMREPRSTHSRWRKR.

An N-terminal signal peptide occupies residues 1–24 (MVSVPTTWCSVALALLVALHEGKG). A propeptide spanning residues 25 to 46 (QAAATLEQPASSSHAQGTHLRL) is cleaved from the precursor. 2 disulfides stabilise this stretch: Cys49/Cys63 and Cys51/Cys59. The propeptide occupies 70–178 (VNTPEQTAPY…RSTHSRWRKR (109 aa)). An endothelin-like region spans residues 96-111 (CQCSSARDPACATFCL). The tract at residues 159–178 (KRQQEAMREPRSTHSRWRKR) is disordered. Residues 160–170 (RQQEAMREPRS) are compositionally biased toward basic and acidic residues.

This sequence belongs to the endothelin/sarafotoxin family. In terms of tissue distribution, expressed in lung, but not in placental stem villi vessels or cultured placental villi smooth muscle cells.

It is found in the secreted. Its function is as follows. Endothelins are endothelium-derived vasoconstrictor peptides. The polypeptide is Endothelin-2 (EDN2) (Homo sapiens (Human)).